Reading from the N-terminus, the 64-residue chain is Large ribosomal subunit protein bL28 (64 aa).

This sequence belongs to the bacterial ribosomal protein bL28 family.

This Mycoplasmoides gallisepticum (strain R(low / passage 15 / clone 2)) (Mycoplasma gallisepticum) protein is Large ribosomal subunit protein bL28.